A 130-amino-acid polypeptide reads, in one-letter code: Ribosome-binding factor A (130 aa).

The protein belongs to the RbfA family. Monomer. Binds 30S ribosomal subunits, but not 50S ribosomal subunits or 70S ribosomes.

Its subcellular location is the cytoplasm. Its function is as follows. One of several proteins that assist in the late maturation steps of the functional core of the 30S ribosomal subunit. Associates with free 30S ribosomal subunits (but not with 30S subunits that are part of 70S ribosomes or polysomes). Required for efficient processing of 16S rRNA. May interact with the 5'-terminal helix region of 16S rRNA. The polypeptide is Ribosome-binding factor A (Roseiflexus castenholzii (strain DSM 13941 / HLO8)).